Reading from the N-terminus, the 384-residue chain is NADH-quinone oxidoreductase subunit D 2 (384 aa).

This sequence belongs to the complex I 49 kDa subunit family. NDH-1 is composed of 14 different subunits. Subunits NuoB, C, D, E, F, and G constitute the peripheral sector of the complex.

The protein localises to the cell membrane. It carries out the reaction a quinone + NADH + 5 H(+)(in) = a quinol + NAD(+) + 4 H(+)(out). In terms of biological role, NDH-1 shuttles electrons from NADH, via FMN and iron-sulfur (Fe-S) centers, to quinones in the respiratory chain. The immediate electron acceptor for the enzyme in this species is believed to be a menaquinone. Couples the redox reaction to proton translocation (for every two electrons transferred, four hydrogen ions are translocated across the cytoplasmic membrane), and thus conserves the redox energy in a proton gradient. The polypeptide is NADH-quinone oxidoreductase subunit D 2 (Symbiobacterium thermophilum (strain DSM 24528 / JCM 14929 / IAM 14863 / T)).